The primary structure comprises 153 residues: Aspartate carbamoyltransferase regulatory chain (153 aa).

Residues Cys110, Cys115, Cys138, and Cys141 each coordinate Zn(2+).

The protein belongs to the PyrI family. As to quaternary structure, contains catalytic and regulatory chains. It depends on Zn(2+) as a cofactor.

Involved in allosteric regulation of aspartate carbamoyltransferase. This Bacteroides thetaiotaomicron (strain ATCC 29148 / DSM 2079 / JCM 5827 / CCUG 10774 / NCTC 10582 / VPI-5482 / E50) protein is Aspartate carbamoyltransferase regulatory chain.